The following is a 68-amino-acid chain: UPF0435 protein SAB1812c (68 aa).

Belongs to the UPF0435 family.

The protein is UPF0435 protein SAB1812c of Staphylococcus aureus (strain bovine RF122 / ET3-1).